Consider the following 126-residue polypeptide: MALSKAEILDAIAGMTVLELSELIKEMEEKFGVSAAAAAVAVAAPAAGGGAAAAEEQTEFTVVLAEAGANKVSVIKAVRELTGLGLKEAKDLVDGAPKPVKEGIAKADAEAAKKKLEEAGAKVEVK.

Belongs to the bacterial ribosomal protein bL12 family. In terms of assembly, homodimer. Part of the ribosomal stalk of the 50S ribosomal subunit. Forms a multimeric L10(L12)X complex, where L10 forms an elongated spine to which 2 to 4 L12 dimers bind in a sequential fashion. Binds GTP-bound translation factors.

Functionally, forms part of the ribosomal stalk which helps the ribosome interact with GTP-bound translation factors. Is thus essential for accurate translation. The chain is Large ribosomal subunit protein bL12 from Bordetella petrii (strain ATCC BAA-461 / DSM 12804 / CCUG 43448).